We begin with the raw amino-acid sequence, 447 residues long: Na(+)-translocating NADH-quinone reductase subunit A (447 aa).

The protein belongs to the NqrA family. In terms of assembly, composed of six subunits; NqrA, NqrB, NqrC, NqrD, NqrE and NqrF.

It catalyses the reaction a ubiquinone + n Na(+)(in) + NADH + H(+) = a ubiquinol + n Na(+)(out) + NAD(+). Functionally, NQR complex catalyzes the reduction of ubiquinone-1 to ubiquinol by two successive reactions, coupled with the transport of Na(+) ions from the cytoplasm to the periplasm. NqrA to NqrE are probably involved in the second step, the conversion of ubisemiquinone to ubiquinol. This chain is Na(+)-translocating NADH-quinone reductase subunit A, found in Haemophilus influenzae (strain 86-028NP).